Consider the following 308-residue polypeptide: MRPEGSLTYRVPERLRQGFCGVGRAAQALVCASAKEGTAFRMEAVQEGAAGVESEQAALGEEAVLLLDDIMAEVEVVAEEEGLVERREEAQRAQQAVPGPGPMTPESAPEELLAVQVELEPVNAQARKAFSRQREKMERRRKPHLDRRGAVIQSVPGFWANVIANHPQMSALITDEDEDMLSYMVSLEVGEEKHPVHLCKIMLFFRSNPYFQNKVITKEYLVNITEYRASHSTPIEWYPDYEVEAYRRRHHNSSLNFFNWFSDHNFAGSNKIAEILCKDLWRNPLQYYKRMKPPEEGTETSGDSQLLS.

This sequence belongs to the nucleosome assembly protein (NAP) family. Phosphorylated. In terms of tissue distribution, specifically expressed in testicular tissues. Isoform 1 and isoform 2 are expressed in spermatogonia and spermatocytes. Found in early testicular carcinoma in situ, spermatogonial cells in testicular tissues of 46,X,Y female and in prostate cancer cell lines.

It localises to the cytoplasm. Its subcellular location is the nucleus. May be involved in sperm differentiation and proliferation. This is Testis-specific Y-encoded protein 1 (TSPY1) from Homo sapiens (Human).